The sequence spans 340 residues: MLSLSKNWNTLIKPNKVAYENFPETNNKAKIVVEPLERGFGLTLGNAMRRVLLSSLQGAAITSIKIPAIEHEFSSIPGVKEDVSEVILNIKGIEVKMHVAEKRIMKLKATGPCVVTAGMIETGHDVEILNPDHVICDLAKDKQLEMELTCKVGKGYVLSTNSYEDNLPIGEIAIDALFNPVKSVTYKVENTRVGQVTDYDKLIMFVETNGDVLPEMAVGLAARILQEQLQLFISFEEQEEDKQVKTDALLFSPYLLKRVDELELSVRSANCLKNDNIIYIGDLVKRTESDMLRTPNFGRKSLNEIKEILAKFNLRFGMDVPDWPPENIQELSKRYEDSYN.

The alpha N-terminal domain (alpha-NTD) stretch occupies residues 1–236 (MLSLSKNWNT…EQLQLFISFE (236 aa)). The segment at 251–340 (FSPYLLKRVD…LSKRYEDSYN (90 aa)) is alpha C-terminal domain (alpha-CTD).

The protein belongs to the RNA polymerase alpha chain family. Homodimer. The RNAP catalytic core consists of 2 alpha, 1 beta, 1 beta' and 1 omega subunit. When a sigma factor is associated with the core the holoenzyme is formed, which can initiate transcription.

The catalysed reaction is RNA(n) + a ribonucleoside 5'-triphosphate = RNA(n+1) + diphosphate. DNA-dependent RNA polymerase catalyzes the transcription of DNA into RNA using the four ribonucleoside triphosphates as substrates. This Rickettsia africae (strain ESF-5) protein is DNA-directed RNA polymerase subunit alpha.